A 418-amino-acid chain; its full sequence is Glutamyl-tRNA reductase (418 aa).

Residues 49-52 (TCNR), Ser107, 112-114 (EPQ), and Gln118 contribute to the substrate site. Cys50 functions as the Nucleophile in the catalytic mechanism. NADP(+) is bound at residue 187–192 (GAGETI).

The protein belongs to the glutamyl-tRNA reductase family. As to quaternary structure, homodimer.

The enzyme catalyses (S)-4-amino-5-oxopentanoate + tRNA(Glu) + NADP(+) = L-glutamyl-tRNA(Glu) + NADPH + H(+). The protein operates within porphyrin-containing compound metabolism; protoporphyrin-IX biosynthesis; 5-aminolevulinate from L-glutamyl-tRNA(Glu): step 1/2. Functionally, catalyzes the NADPH-dependent reduction of glutamyl-tRNA(Glu) to glutamate 1-semialdehyde (GSA). The chain is Glutamyl-tRNA reductase from Aeromonas salmonicida (strain A449).